Here is a 186-residue protein sequence, read N- to C-terminus: UPF0397 protein LCABL_04350 (186 aa).

5 helical membrane passes run 12 to 32 (VVAI…AVIP), 45 to 65 (GFLG…IGFL), 77 to 97 (TPWW…GLFW), 112 to 132 (IVSF…LIAP), and 150 to 170 (GIVS…ILLV).

Belongs to the UPF0397 family.

Its subcellular location is the cell membrane. This is UPF0397 protein LCABL_04350 from Lacticaseibacillus casei (strain BL23) (Lactobacillus casei).